The primary structure comprises 309 residues: Porphobilinogen deaminase (309 aa).

Residue C241 is modified to S-(dipyrrolylmethanemethyl)cysteine.

It belongs to the HMBS family. Monomer. The cofactor is dipyrromethane.

It carries out the reaction 4 porphobilinogen + H2O = hydroxymethylbilane + 4 NH4(+). Its pathway is porphyrin-containing compound metabolism; protoporphyrin-IX biosynthesis; coproporphyrinogen-III from 5-aminolevulinate: step 2/4. Its function is as follows. Tetrapolymerization of the monopyrrole PBG into the hydroxymethylbilane pre-uroporphyrinogen in several discrete steps. The sequence is that of Porphobilinogen deaminase from Campylobacter concisus (strain 13826).